Consider the following 355-residue polypeptide: MPCTWITSDLQLRLILTLFFVAECLSAGMEGTKTSNNSMQQLDNGNHSSVSTTSSTERKQSTVTLYAEVKTSLSVLVDTKAVLTCPPVLWPSVLVVTWEIVLRDKPPCFGAYRRDTNQTTRGNCTDKRITWASRPDENPALQVDPVAITHDGNYTCQIVTSDGNFHHEYHLQVLVPPEVTLIQTEKGTAVCKAAAGKPAAQISWTPEGDCDTEQGPYWGDGTVTVQSTCRWGSRHVLNVSCSVSHLAGNKSLSIQLSQGAEIPAHLKNLYITAPIFIILIVVGSIWLLKISGCRKCKLKKTEHTPVVQEDEMEPYASYTEKNNPLYDITNRVKTSQVLQSEVDGMNLHTIYVPRV.

Residues 1 to 26 (MPCTWITSDLQLRLILTLFFVAECLS) form the signal peptide. At 27 to 267 (AGMEGTKTSN…QGAEIPAHLK (241 aa)) the chain is on the extracellular side. A compositionally biased stretch (polar residues) spans 35-55 (SNNSMQQLDNGNHSSVSTTSS). Residues 35–56 (SNNSMQQLDNGNHSSVSTTSST) are disordered. N46, N123, and N153 each carry an N-linked (GlcNAc...) asparagine glycan. 4 disulfides stabilise this stretch: C85–C156, C108–C124, C191–C241, and C210–C229. The Ig-like C2-type domain maps to 139–257 (PALQVDPVAI…GNKSLSIQLS (119 aa)). The chain crosses the membrane as a helical span at residues 268–288 (NLYITAPIFIILIVVGSIWLL). Topologically, residues 289–355 (KISGCRKCKL…NLHTIYVPRV (67 aa)) are cytoplasmic.

It belongs to the CD200R family. CD200 and CD200R1 interact via their respective N-terminal Ig-like domains.

The protein localises to the cell membrane. In terms of biological role, inhibitory receptor for the CD200/OX2 cell surface glycoprotein. Limits inflammation by inhibiting the expression of pro-inflammatory molecules including TNF-alpha, interferons, and inducible nitric oxide synthase (iNOS) in response to selected stimuli. This Bos taurus (Bovine) protein is Cell surface glycoprotein CD200 receptor 1 (CD200R1).